The chain runs to 419 residues: 3-isopropylmalate dehydratase large subunit (419 aa).

Residues C300, C360, and C363 each contribute to the [4Fe-4S] cluster site.

This sequence belongs to the aconitase/IPM isomerase family. LeuC type 2 subfamily. Heterodimer of LeuC and LeuD. Requires [4Fe-4S] cluster as cofactor.

The catalysed reaction is (2R,3S)-3-isopropylmalate = (2S)-2-isopropylmalate. It functions in the pathway amino-acid biosynthesis; L-leucine biosynthesis; L-leucine from 3-methyl-2-oxobutanoate: step 2/4. Catalyzes the isomerization between 2-isopropylmalate and 3-isopropylmalate, via the formation of 2-isopropylmaleate. The sequence is that of 3-isopropylmalate dehydratase large subunit from Clostridium beijerinckii (strain ATCC 51743 / NCIMB 8052) (Clostridium acetobutylicum).